The following is a 168-amino-acid chain: MRKFTQFVLITAAIMAAPSAFAEMKIAVLNYQMALLESDAAKQYAVDAEKKFGPQLNKLKNLERDAKALQDKLVSNGSKMSQGDREKAELDFKQKARDFQFQSKELNESKAAADRDMLKKLKPKLDQAVEETIKKGGYDMVIERGAVVDVKPQYDITRQVIERMNQLR.

Positions Met-1–Ala-22 are cleaved as a signal peptide.

This sequence belongs to the Skp family.

The sequence is that of Skp-like protein from Pseudomonas aeruginosa (strain ATCC 15692 / DSM 22644 / CIP 104116 / JCM 14847 / LMG 12228 / 1C / PRS 101 / PAO1).